The chain runs to 707 residues: MWLFALLVTLFYGVEGSIYLPQKLYGEVTSPLYPKPYPSDLETTTVITVPMGYRVKLVFWQFDVEPSEGCFYDYVKISADKQTLGRFCGQLDSPLGNPPGSKEFMSQGNKMLLTFHTDFSNEENGTIMFYKGFLAYYQAVDLDECASQPNSVEEGLQPRCQHLCHNYVGGYFCSCHPGYELQKDGQSCQAECSSELYTEPSGYVSSLEYPQPYPPDLRCNYSIRVERGLTVHLKFLDPFEIDDHQQVHCPYDQLQIYANGKNLGEFCGKQRPPDLDTSSNAVDLLFFTDESGDSRGWKLHYTTETIKCPQPKALDEFTIIQDPQPQYQFRDYFIVTCKQGYQLMEGNQALLSFTAVCQNDGTWHRAMPRCKIKNCGQPQSLSNGDFRYITTKGVTTYEASIQYHCHEPYYKMLTRAGSSESMRGIYTCTAQGIWKNEEEGEKMPRCLPVCGKPVNPVTQKERIIRGQPARPGNFPWQAFTTTHGRGGGALLGDRWILTAAHTIYPKHHNKENDNANPKMLVFLGHTNVEQIKKLGHHPVRRVIIHPDYRQDEPNNFEGDIALLELENSVTLGPELLPICLPDNETFYGQGLMGYVSGFGITEDKLAFDLRFVRLPVADSEACQRWLQTKKDTSPFSQNMFCSGDPAVQQDACQGDSGGVFAVRDRNRDIWVATGIVSWGIGCGEGYGFYTKVLNYVDWIKKEMGDEN.

A signal peptide spans 1–16 (MWLFALLVTLFYGVEG). The region spanning 17 to 140 (SIYLPQKLYG…KGFLAYYQAV (124 aa)) is the CUB 1 domain. Residues glutamate 65, aspartate 73, and aspartate 118 each contribute to the Ca(2+) site. An intrachain disulfide couples cysteine 70 to cysteine 88. A glycan (N-linked (GlcNAc...) asparagine) is linked at asparagine 124. Ca(2+) is bound by residues aspartate 141, leucine 142, and glutamate 144. One can recognise an EGF-like; calcium-binding domain in the interval 141-189 (DLDECASQPNSVEEGLQPRCQHLCHNYVGGYFCSCHPGYELQKDGQSCQ). 4 disulfide bridges follow: cysteine 145/cysteine 164, cysteine 160/cysteine 173, cysteine 175/cysteine 188, and cysteine 192/cysteine 219. Ca(2+)-binding residues include asparagine 166, tyrosine 167, and glycine 170. Asparagine 166 carries the post-translational modification (3R)-3-hydroxyasparagine. Residues 192–304 (CSSELYTEPS…RGWKLHYTTE (113 aa)) enclose the CUB 2 domain. Serine 205 carries the phosphoserine; by CK2 modification. Residue asparagine 220 is glycosylated (N-linked (GlcNAc...) asparagine). Ca(2+) contacts are provided by aspartate 242, aspartate 252, aspartate 289, and aspartate 293. Cysteines 249 and 267 form a disulfide. Sushi domains lie at 306 to 372 (IKCP…RCKI) and 373 to 448 (KNCG…RCLP). 5 disulfides stabilise this stretch: cysteine 308/cysteine 357, cysteine 337/cysteine 370, cysteine 375/cysteine 428, cysteine 405/cysteine 446, and cysteine 450/cysteine 579. In terms of domain architecture, Peptidase S1 spans 463–704 (IIRGQPARPG…YVDWIKKEMG (242 aa)). Residues histidine 501 and aspartate 559 each act as charge relay system in the active site. Residue asparagine 583 is glycosylated (N-linked (GlcNAc...) asparagine). 2 disulfide bridges follow: cysteine 622–cysteine 641 and cysteine 652–cysteine 682. Serine 656 functions as the Charge relay system in the catalytic mechanism.

The protein belongs to the peptidase S1 family. As to quaternary structure, core component of the complement C1 complex, a calcium-dependent complex composed of 1 molecule of the C1Q subcomplex, 2 molecules of C1R and 2 molecules of C1S. The C1Q subcomplex is composed 18 subunits: 3 chains of C1QA, C1QB, and C1QC trimerize to form 6 collagen-like triple helices connected to six globular ligand-recognition modules. Within the C1 complex, C1R is a dimer of identical chains, each of which is activated by cleavage into two chains, heavy and light, connected by disulfide bonds. Cleaved and activated by autocatalytic processing to generate Complement C1r subcomponent heavy and light chains that are connected by disulfide bonds. Post-translationally, the iron and 2-oxoglutarate dependent 3-hydroxylation of aspartate and asparagine is (R) stereospecific within EGF domains.

The protein localises to the secreted. The protein resides in the cell surface. The enzyme catalyses Selective cleavage of Lys(or Arg)-|-Ile bond in complement subcomponent C1s to form the active form of C1s (EC 3.4.21.42).. With respect to regulation, activated by the C1Q subcomplex of the C1 complex following C1Q binding to immunoglobulins (IgG or IgM) complexed with antigens to form antigen-antibody complexes on the surface of pathogens. Immunoglobulin-binding promotes autoactivation of C1R, which results in the cleavage of the Arg-Ile bond in the catalytic domain. Functionally, serine protease component of the complement C1 complex, a multiprotein complex that initiates the classical pathway of the complement system, a cascade of proteins that leads to phagocytosis and breakdown of pathogens and signaling that strengthens the adaptive immune system. C1R catalyzes the first enzymatic step in the classical complement pathway: it is activated by the C1Q subcomplex of the C1 complex, which associates with IgG or IgM immunoglobulins complexed with antigens to form antigen-antibody complexes on the surface of pathogens. Immunoglobulin-binding promotes the autocatalytic cleavage and activation of C1R. Activated C1R then cleaves and activates C1S, the second protease of the classical complement pathway. It is unclear if C1R activates C1S within single, strained C1 complexes or between neighboring C1 complexes on surfaces. This chain is Complement C1r-A subcomponent (C1ra), found in Mus musculus (Mouse).